Reading from the N-terminus, the 449-residue chain is Histidinol dehydrogenase (449 aa).

Tyr136, Gln204, and Asn232 together coordinate NAD(+). Positions 255, 277, and 280 each coordinate substrate. Zn(2+) contacts are provided by Gln277 and His280. Catalysis depends on proton acceptor residues Glu346 and His347. Positions 347, 380, 434, and 439 each coordinate substrate. Asp380 provides a ligand contact to Zn(2+). His439 provides a ligand contact to Zn(2+).

Belongs to the histidinol dehydrogenase family. It depends on Zn(2+) as a cofactor.

It carries out the reaction L-histidinol + 2 NAD(+) + H2O = L-histidine + 2 NADH + 3 H(+). Its pathway is amino-acid biosynthesis; L-histidine biosynthesis; L-histidine from 5-phospho-alpha-D-ribose 1-diphosphate: step 9/9. Functionally, catalyzes the sequential NAD-dependent oxidations of L-histidinol to L-histidinaldehyde and then to L-histidine. In Mycobacterium leprae (strain TN), this protein is Histidinol dehydrogenase (hisD).